The sequence spans 285 residues: Probable endonuclease 4 (285 aa).

9 residues coordinate Zn(2+): His-69, His-109, Glu-145, Asp-179, His-182, His-216, Asp-229, His-231, and Glu-261.

It belongs to the AP endonuclease 2 family. Requires Zn(2+) as cofactor.

The enzyme catalyses Endonucleolytic cleavage to 5'-phosphooligonucleotide end-products.. In terms of biological role, endonuclease IV plays a role in DNA repair. It cleaves phosphodiester bonds at apurinic or apyrimidinic (AP) sites, generating a 3'-hydroxyl group and a 5'-terminal sugar phosphate. The protein is Probable endonuclease 4 of Escherichia fergusonii (strain ATCC 35469 / DSM 13698 / CCUG 18766 / IAM 14443 / JCM 21226 / LMG 7866 / NBRC 102419 / NCTC 12128 / CDC 0568-73).